Here is a 125-residue protein sequence, read N- to C-terminus: Protein ApaG (125 aa).

Positions 1–125 (MADSPRVCVQ…FRLAVPTLIH (125 aa)) constitute an ApaG domain.

The chain is Protein ApaG from Cronobacter sakazakii (strain ATCC BAA-894) (Enterobacter sakazakii).